The following is a 516-amino-acid chain: Poly(U)-binding-splicing factor PUF60-B (516 aa).

RRM domains follow at residues 86–164 and 183–261; these read CRVY…RPGS and NRIY…KAVT. Residues 356 to 398 are disordered; sequence TAPASMGTPTSAVQLHTEVKREEDSRRTAEDHSAPVGNGQDSE. Basic and acidic residues predominate over residues 372 to 388; sequence TEVKREEDSRRTAEDHS. The 88-residue stretch at 419 to 506 folds into the RRM 3; atypical domain; it reads TVMVLRNMVG…RKVVAELYDQ (88 aa).

This sequence belongs to the RRM half pint family.

The protein localises to the nucleus. In terms of biological role, DNA- and RNA-binding protein, involved in transcription repression and pre-mRNA splicing. The chain is Poly(U)-binding-splicing factor PUF60-B (puf60b) from Danio rerio (Zebrafish).